Here is a 233-residue protein sequence, read N- to C-terminus: tRNA (guanine-N(7)-)-methyltransferase (233 aa).

Residues glutamate 62, glutamate 87, aspartate 114, and aspartate 136 each coordinate S-adenosyl-L-methionine. Residue aspartate 136 is part of the active site. Residues lysine 140, aspartate 172, and 211-214 (TRYE) contribute to the substrate site.

Belongs to the class I-like SAM-binding methyltransferase superfamily. TrmB family.

The catalysed reaction is guanosine(46) in tRNA + S-adenosyl-L-methionine = N(7)-methylguanosine(46) in tRNA + S-adenosyl-L-homocysteine. It functions in the pathway tRNA modification; N(7)-methylguanine-tRNA biosynthesis. Its function is as follows. Catalyzes the formation of N(7)-methylguanine at position 46 (m7G46) in tRNA. The sequence is that of tRNA (guanine-N(7)-)-methyltransferase from Erythrobacter litoralis (strain HTCC2594).